A 186-amino-acid chain; its full sequence is MSVVDEETRRKILEDWESNPMRKPRVGKVTVNIGVGESGDRLQKAYELLQELTGQKPVYTRAKQTNPSFGIRRGQPIGVKVDLRREQAIEFLDWTLDAVDRELHESQFDEFGNVCFGLEEHIALEGVEYDPEIGIFGMDIAVTLERPGFRVMRRRRCRRPVPRRHRLTKEEGIVFMEEEFDVEVLP.

The protein belongs to the universal ribosomal protein uL5 family. As to quaternary structure, part of the 50S ribosomal subunit; contacts the 5S rRNA and probably tRNA. Forms a bridge to the 30S subunit in the 70S ribosome.

In terms of biological role, this is one of the proteins that bind and probably mediate the attachment of the 5S RNA into the large ribosomal subunit, where it forms part of the central protuberance. In the 70S ribosome it contacts protein S13 of the 30S subunit (bridge B1b), connecting the 2 subunits; this bridge is implicated in subunit movement. May contact the P site tRNA; the 5S rRNA and some of its associated proteins might help stabilize positioning of ribosome-bound tRNAs. This Methanopyrus kandleri (strain AV19 / DSM 6324 / JCM 9639 / NBRC 100938) protein is Large ribosomal subunit protein uL5.